Consider the following 150-residue polypeptide: Actin-related protein 2/3 complex subunit 5-C (150 aa).

Positions 21-45 (NKFVDEEEAGEGQQGPDEGEVDSAI) are disordered.

It belongs to the ARPC5 family. In terms of assembly, component of the Arp2/3 complex composed of actr2/arp2, actr3/arp3, arpc1 (arpc1a or arpc1b), arpc2, arpc3, arpc4 and arpc5.

Its subcellular location is the cytoplasm. It is found in the cytoskeleton. It localises to the cell projection. The protein localises to the nucleus. Functionally, component of the Arp2/3 complex, a multiprotein complex that mediates actin polymerization upon stimulation by nucleation-promoting factor (NPF). The Arp2/3 complex mediates the formation of branched actin networks in the cytoplasm, providing the force for cell motility. In addition to its role in the cytoplasmic cytoskeleton, the Arp2/3 complex also promotes actin polymerization in the nucleus, thereby regulating gene transcription and repair of damaged DNA. The Arp2/3 complex promotes homologous recombination (HR) repair in response to DNA damage by promoting nuclear actin polymerization, leading to drive motility of double-strand breaks (DSBs). The protein is Actin-related protein 2/3 complex subunit 5-C (arpc5-c) of Xenopus laevis (African clawed frog).